Here is a 180-residue protein sequence, read N- to C-terminus: Large ribosomal subunit protein uL5 (180 aa).

It belongs to the universal ribosomal protein uL5 family. Part of the 50S ribosomal subunit; part of the 5S rRNA/L5/L18/L25 subcomplex. Contacts the 5S rRNA and the P site tRNA. Forms a bridge to the 30S subunit in the 70S ribosome.

Its function is as follows. This is one of the proteins that bind and probably mediate the attachment of the 5S RNA into the large ribosomal subunit, where it forms part of the central protuberance. In the 70S ribosome it contacts protein S13 of the 30S subunit (bridge B1b), connecting the 2 subunits; this bridge is implicated in subunit movement. Contacts the P site tRNA; the 5S rRNA and some of its associated proteins might help stabilize positioning of ribosome-bound tRNAs. In Anaeromyxobacter dehalogenans (strain 2CP-1 / ATCC BAA-258), this protein is Large ribosomal subunit protein uL5.